A 201-amino-acid polypeptide reads, in one-letter code: 3-isopropylmalate dehydratase small subunit (201 aa).

Belongs to the LeuD family. LeuD type 1 subfamily. In terms of assembly, heterodimer of LeuC and LeuD.

It carries out the reaction (2R,3S)-3-isopropylmalate = (2S)-2-isopropylmalate. The protein operates within amino-acid biosynthesis; L-leucine biosynthesis; L-leucine from 3-methyl-2-oxobutanoate: step 2/4. Its function is as follows. Catalyzes the isomerization between 2-isopropylmalate and 3-isopropylmalate, via the formation of 2-isopropylmaleate. This chain is 3-isopropylmalate dehydratase small subunit, found in Shewanella sp. (strain ANA-3).